The following is a 537-amino-acid chain: MNSSRSLLALALLFISFLVYQQWEIDKAPKPVVRETAVSQSDTPNSSSASTSAVDSQAKGRVITLQNDVFRLKVDTLGGDVIESELLNYAQELNGEERFTLLENKDGTTYVAQSGLVGKNGIDSAAGRADYQVNGDNFVLAEGQDELSVPFTFEKDGVIYRKIFMLKRGSYDIAVNYEIRNQSDETIEVQPYGQLKHTLVESSGSMAMPTYTGGAYSSSETNYKKYSFDDMKGANLSVNTKAGWVAVLQHYFVSAWIPNQDADNQLYTTTNNGMGFIGFRGPTVTVPAGATETVKTALWTGPKLQNQMGEVAEHLDLTVDYGWAWFIAKPLFALLTLIQSLVSNWGLAIIGVTLVVKAILYPLTKAQYTSMAKMRMLQPKLQEMRERFGDDRQRMSQEMMKLYKEEKVNPLGGCLPLLIQMPIFIALYWTFMEAVELRHAPFFGWIQDLSAQDPYYILPLLMGGSMFLLQKLSPTPVADPMQQKVMNFMPVIFTVFFLWFPAGLVLYWLVSNVITIIQQQLIYRGLEKKGLHSRKSK.

5 helical membrane-spanning segments follow: residues 6 to 26 (SLLA…WEID), 341 to 363 (LVSN…LYPL), 411 to 431 (LGGC…YWTF), 449 to 469 (LSAQ…MFLL), and 490 to 510 (PVIF…YWLV).

The protein belongs to the OXA1/ALB3/YidC family. Type 1 subfamily. Interacts with the Sec translocase complex via SecD. Specifically interacts with transmembrane segments of nascent integral membrane proteins during membrane integration.

It localises to the cell inner membrane. In terms of biological role, required for the insertion and/or proper folding and/or complex formation of integral membrane proteins into the membrane. Involved in integration of membrane proteins that insert both dependently and independently of the Sec translocase complex, as well as at least some lipoproteins. Aids folding of multispanning membrane proteins. This Actinobacillus succinogenes (strain ATCC 55618 / DSM 22257 / CCUG 43843 / 130Z) protein is Membrane protein insertase YidC.